The following is a 600-amino-acid chain: Aspartate--tRNA(Asp/Asn) ligase (600 aa).

Residue Glu174 coordinates L-aspartate. The interval 198–201 is aspartate; it reads QLFK. Arg220 serves as a coordination point for L-aspartate. ATP-binding positions include 220–222 and Gln229; that span reads RDE. Position 457 (His457) interacts with L-aspartate. An ATP-binding site is contributed by Glu491. Arg498 contributes to the L-aspartate binding site. 543-546 is an ATP binding site; it reads GLDR.

This sequence belongs to the class-II aminoacyl-tRNA synthetase family. Type 1 subfamily. Homodimer.

The protein resides in the cytoplasm. The catalysed reaction is tRNA(Asx) + L-aspartate + ATP = L-aspartyl-tRNA(Asx) + AMP + diphosphate. In terms of biological role, aspartyl-tRNA synthetase with relaxed tRNA specificity since it is able to aspartylate not only its cognate tRNA(Asp) but also tRNA(Asn). Reaction proceeds in two steps: L-aspartate is first activated by ATP to form Asp-AMP and then transferred to the acceptor end of tRNA(Asp/Asn). The protein is Aspartate--tRNA(Asp/Asn) ligase of Burkholderia pseudomallei (strain 668).